We begin with the raw amino-acid sequence, 435 residues long: Probable glycine dehydrogenase (decarboxylating) subunit 1 (435 aa).

It belongs to the GcvP family. N-terminal subunit subfamily. In terms of assembly, the glycine cleavage system is composed of four proteins: P, T, L and H. In this organism, the P 'protein' is a heterodimer of two subunits.

It carries out the reaction N(6)-[(R)-lipoyl]-L-lysyl-[glycine-cleavage complex H protein] + glycine + H(+) = N(6)-[(R)-S(8)-aminomethyldihydrolipoyl]-L-lysyl-[glycine-cleavage complex H protein] + CO2. Functionally, the glycine cleavage system catalyzes the degradation of glycine. The P protein binds the alpha-amino group of glycine through its pyridoxal phosphate cofactor; CO(2) is released and the remaining methylamine moiety is then transferred to the lipoamide cofactor of the H protein. In Coprothermobacter proteolyticus (strain ATCC 35245 / DSM 5265 / OCM 4 / BT), this protein is Probable glycine dehydrogenase (decarboxylating) subunit 1.